We begin with the raw amino-acid sequence, 461 residues long: Cysteine--tRNA ligase (461 aa).

Cys-28 is a binding site for Zn(2+). A 'HIGH' region motif is present at residues Ile-30–His-40. Positions 209, 234, and 238 each coordinate Zn(2+). A 'KMSKS' region motif is present at residues Lys-266–Ser-270. Lys-269 provides a ligand contact to ATP.

The protein belongs to the class-I aminoacyl-tRNA synthetase family. Monomer. Zn(2+) serves as cofactor.

It localises to the cytoplasm. The catalysed reaction is tRNA(Cys) + L-cysteine + ATP = L-cysteinyl-tRNA(Cys) + AMP + diphosphate. This Enterobacter sp. (strain 638) protein is Cysteine--tRNA ligase.